Consider the following 586-residue polypeptide: Acyl-coenzyme A synthetase ACSM3, mitochondrial (586 aa).

A mitochondrion-targeting transit peptide spans 1–27; the sequence is MLARVTRKMLRHAKCFQRLAIFGSVRA. Residues Lys73 and Lys106 each carry the N6-succinyllysine modification. Residue Lys157 is modified to N6-acetyllysine. ATP is bound by residues 235 to 243, 374 to 379, Asp461, Arg476, and Lys572; these read TSGTSGYPK and EGYGQT.

It belongs to the ATP-dependent AMP-binding enzyme family. Mg(2+) is required as a cofactor. It depends on Mn(2+) as a cofactor.

The protein localises to the mitochondrion. It localises to the mitochondrion matrix. The enzyme catalyses a medium-chain fatty acid + ATP + CoA = a medium-chain fatty acyl-CoA + AMP + diphosphate. It catalyses the reaction propanoate + ATP + CoA = propanoyl-CoA + AMP + diphosphate. It carries out the reaction butanoate + ATP + CoA = butanoyl-CoA + AMP + diphosphate. The catalysed reaction is 2-methylpropanoate + ATP + CoA = 2-methylpropanoyl-CoA + AMP + diphosphate. The enzyme catalyses 2-methylbutanoate + ATP + CoA = 2-methylbutanoyl-CoA + AMP + diphosphate. It catalyses the reaction octanoate + ATP + CoA = octanoyl-CoA + AMP + diphosphate. Functionally, catalyzes the activation of fatty acids by CoA to produce an acyl-CoA, the first step in fatty acid metabolism. Capable of activating medium-chain fatty acids with a preference for isobutyrate among fatty acids with 2-6 carbon atoms. This is Acyl-coenzyme A synthetase ACSM3, mitochondrial (ACSM3) from Homo sapiens (Human).